The sequence spans 466 residues: UDP-N-acetylmuramate--L-alanine ligase (466 aa).

Residue 114–120 participates in ATP binding; the sequence is GTHGKTT.

The protein belongs to the MurCDEF family.

It is found in the cytoplasm. It carries out the reaction UDP-N-acetyl-alpha-D-muramate + L-alanine + ATP = UDP-N-acetyl-alpha-D-muramoyl-L-alanine + ADP + phosphate + H(+). The protein operates within cell wall biogenesis; peptidoglycan biosynthesis. Its function is as follows. Cell wall formation. The chain is UDP-N-acetylmuramate--L-alanine ligase from Mesorhizobium japonicum (strain LMG 29417 / CECT 9101 / MAFF 303099) (Mesorhizobium loti (strain MAFF 303099)).